Consider the following 676-residue polypeptide: RNA helicase NPH-II (676 aa).

Residues 172 to 347 (FSAWISHRPV…VFLPNPAFIH (176 aa)) enclose the Helicase ATP-binding domain. ATP is bound at residue 185–192 (GGTGVGKT). A DEXH box motif is present at residues 296–299 (DEVH). One can recognise a Helicase C-terminal domain in the interval 366-535 (NPSSRMAYIE…NYILYANKFN (170 aa)).

The protein belongs to the DEAD box helicase family. DEAH subfamily. As to quaternary structure, monomer.

It is found in the virion. It catalyses the reaction ATP + H2O = ADP + phosphate + H(+). In terms of biological role, NTP-dependent helicase that catalyzes unidirectional unwinding of 3'tailed duplex RNAs and plays an important role during transcription of early mRNAs, presumably by preventing R-loop formation behind the elongating RNA polymerase. Might also play a role in the export of newly synthesized mRNA chains out of the core into the cytoplasm. Required for replication and propagation of viral particles. In Vaccinia virus (strain Ankara) (VACV), this protein is RNA helicase NPH-II (OPG084).